Here is a 240-residue protein sequence, read N- to C-terminus: 1-(5-phosphoribosyl)-5-[(5-phosphoribosylamino)methylideneamino] imidazole-4-carboxamide isomerase (240 aa).

D10 functions as the Proton acceptor in the catalytic mechanism. D131 functions as the Proton donor in the catalytic mechanism.

This sequence belongs to the HisA/HisF family.

It localises to the cytoplasm. It catalyses the reaction 1-(5-phospho-beta-D-ribosyl)-5-[(5-phospho-beta-D-ribosylamino)methylideneamino]imidazole-4-carboxamide = 5-[(5-phospho-1-deoxy-D-ribulos-1-ylimino)methylamino]-1-(5-phospho-beta-D-ribosyl)imidazole-4-carboxamide. Its pathway is amino-acid biosynthesis; L-histidine biosynthesis; L-histidine from 5-phospho-alpha-D-ribose 1-diphosphate: step 4/9. The polypeptide is 1-(5-phosphoribosyl)-5-[(5-phosphoribosylamino)methylideneamino] imidazole-4-carboxamide isomerase (Shouchella clausii (strain KSM-K16) (Alkalihalobacillus clausii)).